Consider the following 193-residue polypeptide: dCTP deaminase (193 aa).

DCTP-binding positions include 110 to 115, D128, 136 to 138, Y171, K178, and Q182; these read RSSLAR and VLE. E138 serves as the catalytic Proton donor/acceptor. Residues 169 to 193 are disordered; it reads RPYNSRQDAKYRGQQGAVASRIDKD.

Belongs to the dCTP deaminase family. Homotrimer.

It catalyses the reaction dCTP + H2O + H(+) = dUTP + NH4(+). It participates in pyrimidine metabolism; dUMP biosynthesis; dUMP from dCTP (dUTP route): step 1/2. In terms of biological role, catalyzes the deamination of dCTP to dUTP. This Yersinia pestis bv. Antiqua (strain Antiqua) protein is dCTP deaminase.